The primary structure comprises 176 residues: Ribosome maturation factor RimM (176 aa).

Residues 102-175 (KNDYYWNDII…TDKKFILVQW (74 aa)) form the PRC barrel domain.

This sequence belongs to the RimM family. In terms of assembly, binds ribosomal protein uS19.

The protein localises to the cytoplasm. An accessory protein needed during the final step in the assembly of 30S ribosomal subunit, possibly for assembly of the head region. Essential for efficient processing of 16S rRNA. May be needed both before and after RbfA during the maturation of 16S rRNA. It has affinity for free ribosomal 30S subunits but not for 70S ribosomes. The sequence is that of Ribosome maturation factor RimM from Buchnera aphidicola subsp. Acyrthosiphon pisum (strain APS) (Acyrthosiphon pisum symbiotic bacterium).